A 304-amino-acid chain; its full sequence is MGFFDRLKAGLAKTRERLLKAIPWGGNLEEVLEELEMALLAADVGLSATEEILQEVRASGRKDLKEAVKEKLVGMLEPDERRATLRKLGFNPQKPKPVEPKGRVVLVVGVNGVGKTTTIAKLGRYYQNLGKKVMFCAGDTFRAAGGTQLSEWGKRLSIPVIQGPEGTDPAALAYDAVQAMKARGYDLLFVDTAGRLHTKHNLMEELKKVKRAIAKADPEEPKEVWLVLDAVTGQNGLEQAKKFHEAVGLTGVIVTKLDGTAKGGVLIPIVRTLKVPIKFVGVGEGPDDLQPFDPEAFVEALLED.

Residues 109–116, 191–195, and 255–258 each bind GTP; these read GVNGVGKT, DTAGR, and TKLD.

This sequence belongs to the GTP-binding SRP family. FtsY subfamily. Part of the signal recognition particle protein translocation system, which is composed of SRP and FtsY. Post-translationally, sensitive to endogenous proteolytic cleavage between residues 18 and 19 and between residues 86 and 87.

It is found in the cell membrane. The protein localises to the cytoplasm. The enzyme catalyses GTP + H2O = GDP + phosphate + H(+). In terms of biological role, involved in targeting and insertion of nascent membrane proteins into the cytoplasmic membrane. Acts as a receptor for the complex formed by the signal recognition particle (SRP) and the ribosome-nascent chain (RNC). The sequence is that of Signal recognition particle receptor FtsY from Thermus aquaticus.